The primary structure comprises 480 residues: UDP-glycosyltransferase 72B2 (480 aa).

Residues S277, 347–349 (APQ), 364–372 (HCGWNSTLE), and 386–389 (FAEQ) each bind UDP-alpha-D-glucose.

This sequence belongs to the UDP-glycosyltransferase family.

The chain is UDP-glycosyltransferase 72B2 (UGT72B2) from Arabidopsis thaliana (Mouse-ear cress).